Reading from the N-terminus, the 863-residue chain is Leucine--tRNA ligase (863 aa).

The short motif at 42–52 (PYPSGRLHMGH) is the 'HIGH' region element. The short motif at 622–626 (KMSKS) is the 'KMSKS' region element. K625 contacts ATP.

Belongs to the class-I aminoacyl-tRNA synthetase family.

It is found in the cytoplasm. It carries out the reaction tRNA(Leu) + L-leucine + ATP = L-leucyl-tRNA(Leu) + AMP + diphosphate. This Shewanella frigidimarina (strain NCIMB 400) protein is Leucine--tRNA ligase.